The sequence spans 376 residues: uncharacterized protein (376 aa).

The N-terminal stretch at 1-28 (MCKPRVWRIAHTIVHVGALLLGTSQLTT) is a signal peptide. C29 carries the N-palmitoyl cysteine lipid modification. Residue C29 is the site of S-diacylglycerol cysteine attachment.

It belongs to the TP013X lipoprotein family.

It localises to the cell membrane. This is an uncharacterized protein from Treponema pallidum (strain Nichols).